The chain runs to 511 residues: Adenosine deaminase 2 (511 aa).

Positions 1 to 29 (MLVDGPSEWPALRFLLLAVAMSFFGSALS) are cleaved as a signal peptide. The dimerization stretch occupies residues 30–100 (IDETRAHLLL…HLIERSQVFN (71 aa)). Residues His112 and His114 each coordinate Zn(2+). Substrate is bound at residue Asp115. Asn127 carries an N-linked (GlcNAc...) asparagine glycan. The PRB domain stretch occupies residues 127–185 (NVTYRPHCHICFTPKGIMQFRFAHPTPRTSEKCSKWILLEDYRKRVQNVTEFDDSLLRN). Cys137 and Cys159 are oxidised to a cystine. Residues Asn174 and Asn185 are each glycosylated (N-linked (GlcNAc...) asparagine). Substrate-binding positions include 204–211 (WSKFETIF), His293, and Gly326. His356 lines the Zn(2+) pocket. The Proton donor role is filled by Glu359. Asn378 carries an N-linked (GlcNAc...) asparagine glycan. The active-site Proton acceptor is the His384. Asp441 is a Zn(2+) binding site. Substrate is bound at residue Asp442.

Belongs to the metallo-dependent hydrolases superfamily. Adenosine and AMP deaminases family. ADGF subfamily. In terms of assembly, homodimer. Interacts with adenosine receptors. Binds heparin. It depends on Zn(2+) as a cofactor.

The protein localises to the secreted. The enzyme catalyses adenosine + H2O + H(+) = inosine + NH4(+). Its function is as follows. Adenosine deaminase that may contribute to the degradation of extracellular adenosine, a signaling molecule that controls a variety of cellular responses. Requires elevated adenosine levels for optimal enzyme activity. Binds to cell surfaces via proteoglycans and may play a role in the regulation of cell proliferation and differentiation, independently of its enzyme activity. The chain is Adenosine deaminase 2 from Pongo abelii (Sumatran orangutan).